The chain runs to 222 residues: Putative N-acetylmannosamine-6-phosphate 2-epimerase (222 aa).

This sequence belongs to the NanE family.

The catalysed reaction is an N-acyl-D-glucosamine 6-phosphate = an N-acyl-D-mannosamine 6-phosphate. It participates in amino-sugar metabolism; N-acetylneuraminate degradation; D-fructose 6-phosphate from N-acetylneuraminate: step 3/5. Functionally, converts N-acetylmannosamine-6-phosphate (ManNAc-6-P) to N-acetylglucosamine-6-phosphate (GlcNAc-6-P). The chain is Putative N-acetylmannosamine-6-phosphate 2-epimerase from Staphylococcus saprophyticus subsp. saprophyticus (strain ATCC 15305 / DSM 20229 / NCIMB 8711 / NCTC 7292 / S-41).